Consider the following 433-residue polypeptide: Steroid hormone receptor ERR2 (433 aa).

The disordered stretch occupies residues 1–38 (MSSDDRHLGSSCGSFIKTEPSSPSSGIDALSHHSPSGS). Residues 28–38 (DALSHHSPSGS) show a composition bias toward low complexity. Positions 93-211 (YMLNAIPKRL…SPPAKKPLTK (119 aa)) are interaction with NANOG. Positions 100 to 186 (KRLCLVCGDI…RVRGGRQKYK (87 aa)) form a DNA-binding region, nuclear receptor. NR C4-type zinc fingers lie at residues 103-123 (CLVC…CEAC) and 139-163 (CPAT…FMKC). Positions 203–433 (PPAKKPLTKI…LFLEMLEAKV (231 aa)) are essential for ESRRB transcriptional activity and interaction with NCOA3. In terms of domain architecture, NR LBD spans 208-432 (PLTKIVSYLL…KLFLEMLEAK (225 aa)).

It belongs to the nuclear hormone receptor family. NR3 subfamily. As to quaternary structure, binds DNA as a monomer. Interacts with NR0B1; represses ESRRB activity at the GATA6 promoter. Interacts with NANOG; reciprocally modulates their transcriptional activities and activates POU5F1 expression. Interacts with NCOA3; mediates the interaction between ESRRB and RNA polymerase II complexes and allows NCOA3 corecruitment to ESRRB, KLF4, NANOG, and SOX2 enhancer regions to trigger ESRRB-dependent gene activation involved in self-renewal and pluripotency. Interacts with KDM1A; co-occupes the core set of ESRRB targets including ELF5 and EOMES. Interacts with the multiprotein complex Integrator, at least composed of INTS1, INTS2, INTS3, INTS4, INTS5, INTS6, INTS7, INTS8, INTS9/RC74, INTS10, INTS11/CPSF3L and INTS12; ESRRB is probably not a core component of the integrator complex and associates to integrator via its interaction with INTS1 and INTS9; attracts the transcriptional machinery. Interacts with JARID2. Interacts with POU5F1; recruits ESRRB near the POU5F1-SOX2 element in the NANOG proximal promoter leading to activation of NANOG expression; the interaction is DNA independent. Interacts with NFE2L2; represses NFE2L2 transcriptional activity. Isoform 1 interacts with ESR1. Acetylated by PCAF/KAT2 (in vitro).

The protein localises to the nucleus. It localises to the cytoplasm. The protein resides in the chromosome. In terms of biological role, transcription factor that binds a canonical ESRRB recognition (ERRE) sequence 5'TCAAGGTCA-3' localized on promoter and enhancer of targets genes regulating their expression or their transcription activity. Plays a role, in a LIF-independent manner, in maintainance of self-renewal and pluripotency of embryonic and trophoblast stem cells through different signaling pathways including FGF signaling pathway and Wnt signaling pathways. Involved in morula development (2-16 cells embryos) by acting as a regulator at the 8-cell stage. Upon FGF signaling pathway activation, interacts with KDM1A by directly binding to enhancer site of ELF5 and EOMES and activating their transcription leading to self-renewal of trophoblast stem cells. Also regulates expression of multiple rod-specific genes and is required for survival of this cell type. Plays a role as transcription factor activator of GATA6, NR0B1, POU5F1 and PERM1. Plays a role as transcription factor repressor of NFE2L2 transcriptional activity and ESR1 transcriptional activity. During mitosis remains bound to a subset of interphase target genes, including pluripotency regulators, through the canonical ESRRB recognition (ERRE) sequence, leading to their transcriptional activation in early G1 phase. Can coassemble on structured DNA elements with other transcription factors like SOX2, POU5F1, KDM1A and NCOA3 to trigger ESRRB-dependent gene activation. This mechanism, in the case of SOX2 corecruitment prevents the embryonic stem cells (ESCs) to epiblast stem cells (EpiSC) transition through positive regulation of NR0B1 that inhibits the EpiSC transcriptional program. Also plays a role inner ear development by controlling expression of ion channels and transporters and in early placentation. Its function is as follows. Transcription factor that binds a canonical ESRRB recognition (ERRE) sequence 5'TCAAGGTCA-3' localized on promoter and enhancer of targets genes regulating their expression or their transcription activity. Positively regulates ESR1 transcriptional activity upon E2 stimulation. This is Steroid hormone receptor ERR2 from Homo sapiens (Human).